A 79-amino-acid chain; its full sequence is Polcalcin Bra r 1 (79 aa).

EF-hand domains follow at residues Met1–Val36 and Asp39–Leu71. The Ca(2+) site is built by Asp14, Asp16, Asp18, Lys20, Glu25, Asp49, Asp51, Asp53, Asn55, and Glu60.

The polypeptide is Polcalcin Bra r 1 (Brassica campestris (Field mustard)).